The following is a 415-amino-acid chain: Lipoyl synthase, mitochondrial (415 aa).

The transit peptide at 1–32 (MAASTNRLRFLYSSARTVPQTGSITPISRRTY) directs the protein to the mitochondrion. Polar residues predominate over residues 22-32 (GSITPISRRTY). The segment at 22–53 (GSITPISRRTYATTEPSPSATGAPATARKRTN) is disordered. A compositionally biased stretch (low complexity) spans 33-47 (ATTEPSPSATGAPAT). 7 residues coordinate [4Fe-4S] cluster: Cys-132, Cys-137, Cys-143, Cys-163, Cys-167, Cys-170, and Ser-378. In terms of domain architecture, Radical SAM core spans 146–367 (GSDKSAATAT…RQRALDMGFL (222 aa)). Residues 395–415 (AAGTAGESVTDSKAAVDEATR) form a disordered region.

This sequence belongs to the radical SAM superfamily. Lipoyl synthase family. Requires [4Fe-4S] cluster as cofactor.

Its subcellular location is the mitochondrion. The enzyme catalyses [[Fe-S] cluster scaffold protein carrying a second [4Fe-4S](2+) cluster] + N(6)-octanoyl-L-lysyl-[protein] + 2 oxidized [2Fe-2S]-[ferredoxin] + 2 S-adenosyl-L-methionine + 4 H(+) = [[Fe-S] cluster scaffold protein] + N(6)-[(R)-dihydrolipoyl]-L-lysyl-[protein] + 4 Fe(3+) + 2 hydrogen sulfide + 2 5'-deoxyadenosine + 2 L-methionine + 2 reduced [2Fe-2S]-[ferredoxin]. It participates in protein modification; protein lipoylation via endogenous pathway; protein N(6)-(lipoyl)lysine from octanoyl-[acyl-carrier-protein]: step 2/2. In terms of biological role, catalyzes the radical-mediated insertion of two sulfur atoms into the C-6 and C-8 positions of the octanoyl moiety bound to the lipoyl domains of lipoate-dependent enzymes, thereby converting the octanoylated domains into lipoylated derivatives. The protein is Lipoyl synthase, mitochondrial of Aspergillus oryzae (strain ATCC 42149 / RIB 40) (Yellow koji mold).